A 182-amino-acid polypeptide reads, in one-letter code: Large ribosomal subunit protein uL5 (182 aa).

This sequence belongs to the universal ribosomal protein uL5 family. Part of the 50S ribosomal subunit; part of the 5S rRNA/L5/L18/L25 subcomplex. Contacts the 5S rRNA and the P site tRNA. Forms a bridge to the 30S subunit in the 70S ribosome.

Its function is as follows. This is one of the proteins that bind and probably mediate the attachment of the 5S RNA into the large ribosomal subunit, where it forms part of the central protuberance. In the 70S ribosome it contacts protein S13 of the 30S subunit (bridge B1b), connecting the 2 subunits; this bridge is implicated in subunit movement. Contacts the P site tRNA; the 5S rRNA and some of its associated proteins might help stabilize positioning of ribosome-bound tRNAs. In Mycoplasma mobile (strain ATCC 43663 / 163K / NCTC 11711) (Mesomycoplasma mobile), this protein is Large ribosomal subunit protein uL5.